A 484-amino-acid polypeptide reads, in one-letter code: UDP-N-acetylmuramate--L-alanine ligase (484 aa).

125 to 131 contributes to the ATP binding site; sequence GTHGKTT.

The protein belongs to the MurCDEF family.

It localises to the cytoplasm. The catalysed reaction is UDP-N-acetyl-alpha-D-muramate + L-alanine + ATP = UDP-N-acetyl-alpha-D-muramoyl-L-alanine + ADP + phosphate + H(+). Its pathway is cell wall biogenesis; peptidoglycan biosynthesis. In terms of biological role, cell wall formation. The polypeptide is UDP-N-acetylmuramate--L-alanine ligase (Buchnera aphidicola subsp. Acyrthosiphon pisum (strain Tuc7)).